The primary structure comprises 193 residues: Xanthine phosphoribosyltransferase (193 aa).

L20 and T27 together coordinate xanthine. A 5-phospho-alpha-D-ribose 1-diphosphate-binding site is contributed by 128–132; the sequence is ANGQA. K156 lines the xanthine pocket.

The protein belongs to the purine/pyrimidine phosphoribosyltransferase family. Xpt subfamily. As to quaternary structure, homodimer.

It localises to the cytoplasm. The enzyme catalyses XMP + diphosphate = xanthine + 5-phospho-alpha-D-ribose 1-diphosphate. It participates in purine metabolism; XMP biosynthesis via salvage pathway; XMP from xanthine: step 1/1. Converts the preformed base xanthine, a product of nucleic acid breakdown, to xanthosine 5'-monophosphate (XMP), so it can be reused for RNA or DNA synthesis. The polypeptide is Xanthine phosphoribosyltransferase (Streptococcus pyogenes serotype M3 (strain ATCC BAA-595 / MGAS315)).